The following is a 140-amino-acid chain: Hemoglobin subunit beta (140 aa).

Residues 1 to 140 (GSDLVSGFWG…VGDALAKAYH (140 aa)) form the Globin domain. Heme b-binding residues include His-57 and His-86.

The protein belongs to the globin family. In terms of assembly, heterotetramer of two alpha chains and two beta chains. As to expression, red blood cells.

Involved in oxygen transport from the lung to the various peripheral tissues. The polypeptide is Hemoglobin subunit beta (HBB) (Pelophylax lessonae (Pool frog)).